Consider the following 243-residue polypeptide: Orotidine 5'-phosphate decarboxylase (243 aa).

Substrate contacts are provided by residues Asp-16, Lys-38, 65 to 74 (DLKLHDIPNT), Thr-120, Arg-181, Gln-190, Gly-210, and Arg-211. The active-site Proton donor is Lys-67.

The protein belongs to the OMP decarboxylase family. Type 1 subfamily. Homodimer.

It carries out the reaction orotidine 5'-phosphate + H(+) = UMP + CO2. It functions in the pathway pyrimidine metabolism; UMP biosynthesis via de novo pathway; UMP from orotate: step 2/2. Its function is as follows. Catalyzes the decarboxylation of orotidine 5'-monophosphate (OMP) to uridine 5'-monophosphate (UMP). This Bradyrhizobium sp. (strain BTAi1 / ATCC BAA-1182) protein is Orotidine 5'-phosphate decarboxylase.